The sequence spans 293 residues: 4-hydroxy-tetrahydrodipicolinate synthase (293 aa).

A pyruvate-binding site is contributed by Thr-47. Tyr-135 acts as the Proton donor/acceptor in catalysis. The active-site Schiff-base intermediate with substrate is Lys-163. A pyruvate-binding site is contributed by Ile-204.

It belongs to the DapA family. Homotetramer; dimer of dimers.

It localises to the cytoplasm. It carries out the reaction L-aspartate 4-semialdehyde + pyruvate = (2S,4S)-4-hydroxy-2,3,4,5-tetrahydrodipicolinate + H2O + H(+). Its pathway is amino-acid biosynthesis; L-lysine biosynthesis via DAP pathway; (S)-tetrahydrodipicolinate from L-aspartate: step 3/4. In terms of biological role, catalyzes the condensation of (S)-aspartate-beta-semialdehyde [(S)-ASA] and pyruvate to 4-hydroxy-tetrahydrodipicolinate (HTPA). The chain is 4-hydroxy-tetrahydrodipicolinate synthase from Brachyspira hyodysenteriae (strain ATCC 49526 / WA1).